The sequence spans 783 residues: Polyadenylate-binding protein, cytoplasmic and nuclear (783 aa).

A disordered region spans residues 16–65 (DLGNTSLGGGDNRAAPAINTNVAPGEYQTADPDTAGPTPSSAAPHPQSSA). Positions 54 to 65 (PSSAAPHPQSSA) are enriched in low complexity. RRM domains are found at residues 65–143 (ASLY…WSQR), 153–230 (GNVF…YHIP), 246–323 (TNIY…RAQK), and 349–471 (VNLY…LAQR). Disordered stretches follow at residues 381-428 (MRDA…KGDR), 596-671 (AAAL…AAGG), and 752-783 (VKSQQGPGQGPAPTQGEAEAEKPKEEKAEEKA). Over residues 396-406 (GKDKENKKEGE) the composition is skewed to basic and acidic residues. The segment covering 407 to 416 (QAAEAEGEAE) has biased composition (acidic residues). A compositionally biased stretch (basic and acidic residues) spans 417-428 (GAEKKTEKKGDR). Positions 601–614 (NGRGGPGGPGGRGM) are enriched in gly residues. A compositionally biased stretch (low complexity) spans 630–641 (AGFPPNGRPQNG). The segment covering 642–655 (NMGGRGGPGRGGNF) has biased composition (gly residues). Residues 656-671 (AAGRGAPPAGPLAAGG) are compositionally biased toward low complexity. The PABC domain maps to 676 to 753 (SSLLQSQLTA…AMAVYDEYVK (78 aa)). A compositionally biased stretch (basic and acidic residues) spans 770–783 (EAEKPKEEKAEEKA).

This sequence belongs to the polyadenylate-binding protein type-1 family.

It is found in the cytoplasm. Its subcellular location is the nucleus. In terms of biological role, binds the poly(A) tail of mRNA. Appears to be an important mediator of the multiple roles of the poly(A) tail in mRNA biogenesis, stability and translation. In the nucleus, involved in both mRNA cleavage and polyadenylation. Is also required for efficient mRNA export to the cytoplasm. Acts in concert with a poly(A)-specific nuclease (PAN) to affect poly(A) tail shortening, which may occur concomitantly with either nucleocytoplasmic mRNA transport or translational initiation. In the cytoplasm, stimulates translation initiation and regulates mRNA decay through translation termination-coupled poly(A) shortening, probably mediated by PAN. The sequence is that of Polyadenylate-binding protein, cytoplasmic and nuclear (PAB1) from Chaetomium globosum (strain ATCC 6205 / CBS 148.51 / DSM 1962 / NBRC 6347 / NRRL 1970) (Soil fungus).